We begin with the raw amino-acid sequence, 515 residues long: Methionine--tRNA ligase (515 aa).

Positions 13–23 (AYPNGKPHIGH) match the 'HIGH' region motif. A 'KMSKS' region motif is present at residues 300 to 304 (KMSKS). Lys-303 is a binding site for ATP.

The protein belongs to the class-I aminoacyl-tRNA synthetase family. MetG type 2B subfamily. As to quaternary structure, monomer.

The protein localises to the cytoplasm. The catalysed reaction is tRNA(Met) + L-methionine + ATP = L-methionyl-tRNA(Met) + AMP + diphosphate. Its function is as follows. Is required not only for elongation of protein synthesis but also for the initiation of all mRNA translation through initiator tRNA(fMet) aminoacylation. This is Methionine--tRNA ligase from Brucella suis biovar 1 (strain 1330).